Reading from the N-terminus, the 295-residue chain is Tyrosine recombinase XerC (295 aa).

In terms of domain architecture, Core-binding (CB) spans 1 to 85 (MQTYLQKYWN…ALRQFLAFLV (85 aa)). The 180-residue stretch at 106–285 (HLPKNINAEQ…NFQHLAEVYD (180 aa)) folds into the Tyr recombinase domain. Residues Arg-145, Lys-169, His-237, Arg-240, and His-263 contribute to the active site. Tyr-272 (O-(3'-phospho-DNA)-tyrosine intermediate) is an active-site residue.

Belongs to the 'phage' integrase family. XerC subfamily. In terms of assembly, forms a cyclic heterotetrameric complex composed of two molecules of XerC and two molecules of XerD.

Its subcellular location is the cytoplasm. Its function is as follows. Site-specific tyrosine recombinase, which acts by catalyzing the cutting and rejoining of the recombining DNA molecules. The XerC-XerD complex is essential to convert dimers of the bacterial chromosome into monomers to permit their segregation at cell division. It also contributes to the segregational stability of plasmids. This chain is Tyrosine recombinase XerC, found in Mannheimia succiniciproducens (strain KCTC 0769BP / MBEL55E).